Reading from the N-terminus, the 818-residue chain is G-type lectin S-receptor-like serine/threonine-protein kinase At1g67520 (818 aa).

A signal peptide spans 1 to 22 (MCSNGIFVSLLTLSLLLGKSCS). Residues 23–387 (ETDTLHQGQF…NENKKVAAWH (365 aa)) lie on the Extracellular side of the membrane. The 126-residue stretch at 24–149 (TDTLHQGQFL…DADGSMKRVL (126 aa)) folds into the Bulb-type lectin domain. N-linked (GlcNAc...) asparagine glycans are attached at residues N123, N199, and N337. The region spanning 290–379 (CLAAGYVVRD…PRTIYIRGNE (90 aa)) is the PAN domain. 2 disulfide bridges follow: C330/C353 and C334/C340. A helical membrane pass occupies residues 388-408 (IVVATLFLMTPIIWFIIYLVL). The Cytoplasmic portion of the chain corresponds to 409-818 (RKFNVKGRNC…SITITVLEAR (410 aa)). Positions 496–785 (FSDENKLGEG…ALSLPKEPAF (290 aa)) constitute a Protein kinase domain. ATP contacts are provided by residues 502 to 510 (LGEGGFGPV) and K524. S530 bears the Phosphoserine mark. The segment at 585–602 (LRKNVLDWTLRFRIMEGI) is caM-binding. The active-site Proton acceptor is D621. S625 and S638 each carry phosphoserine. The residue at position 655 (T655) is a Phosphothreonine. Phosphoserine occurs at positions 699 and 807. Residue T813 is modified to Phosphothreonine.

This sequence belongs to the protein kinase superfamily. Ser/Thr protein kinase family.

The protein resides in the cell membrane. The catalysed reaction is L-seryl-[protein] + ATP = O-phospho-L-seryl-[protein] + ADP + H(+). It catalyses the reaction L-threonyl-[protein] + ATP = O-phospho-L-threonyl-[protein] + ADP + H(+). The chain is G-type lectin S-receptor-like serine/threonine-protein kinase At1g67520 from Arabidopsis thaliana (Mouse-ear cress).